A 1082-amino-acid chain; its full sequence is Protein SPT23 (1082 aa).

Disordered regions lie at residues 315-346, 376-417, and 457-476; these read NASN…PQSD, NNNN…FSDI, and ASAR…FMST. The segment covering 316-328 has biased composition (low complexity); it reads ASNTTTPTSTSNA. Over residues 329 to 346 the composition is skewed to polar residues; the sequence is QVSPMTNDTRSFSSPQSD. 2 stretches are compositionally biased toward low complexity: residues 376–391 and 399–416; these read NNNN…KTNT and HFPS…SFSD. Residue Ser468 is modified to Phosphoserine. The IPT/TIG domain maps to 508 to 585; that stretch reads PSIQRVIPAQ…DPSETSMRNN (78 aa). 2 ANK repeats span residues 709–738 and 742–771; these read RGRT…HLND and FGFT…NIMK.

Its function is as follows. Dosage-dependent suppressor of Ty-induced promoter mutations. May exert its suppression effect through protein-protein interactions since does not present any of the motifs generally found in transcriptional activators or DNA binding proteins. The polypeptide is Protein SPT23 (SPT23) (Saccharomyces cerevisiae (strain ATCC 204508 / S288c) (Baker's yeast)).